We begin with the raw amino-acid sequence, 150 residues long: MKIILTADVTGLGESGDIVEVKDGYARNLLLPRGLAIVATKGAQKQVETIRRTQEAKRVRNLEHAQELKQQLQGLGAVTLTAKVSKQGKLFGSITAADIVSAVRKAGGPNLDKRSVDTRGHIKSLGKHAVDVRLHPDVKASVSVQISAAS.

This sequence belongs to the bacterial ribosomal protein bL9 family.

Functionally, binds to the 23S rRNA. The polypeptide is Large ribosomal subunit protein bL9 (Saccharopolyspora erythraea (strain ATCC 11635 / DSM 40517 / JCM 4748 / NBRC 13426 / NCIMB 8594 / NRRL 2338)).